The primary structure comprises 398 residues: Lysophosphatidylserine lipase ABHD12 (398 aa).

Residues 1–15 are compositionally biased toward basic and acidic residues; that stretch reads MRKRTEPVTLEHERC. Positions 1–24 are disordered; that stretch reads MRKRTEPVTLEHERCAASGSSSSG. Residues 1–74 lie on the Cytoplasmic side of the membrane; the sequence is MRKRTEPVTL…RKSLWFRLRK (74 aa). The chain crosses the membrane as a helical span at residues 75–95; the sequence is ILLCVLGFYIAIPFLVKLCPG. Residues 96–398 lie on the Extracellular side of the membrane; that stretch reads IQAKLIFLNF…LGKSEPERQH (303 aa). N-linked (GlcNAc...) asparagine glycosylation is present at Asn123. Ser246 functions as the Nucleophile in the catalytic mechanism. Active-site charge relay system residues include Asp333 and His372.

It belongs to the serine esterase family. Glycosylated.

It is found in the endoplasmic reticulum membrane. The protein resides in the mitochondrion. The enzyme catalyses 1-(9Z-octadecenoyl)-sn-glycero-3-phospho-L-serine + H2O = sn-glycero-3-phospho-L-serine + (9Z)-octadecenoate + H(+). It carries out the reaction 1-(9Z-octadecenoyl)-sn-glycero-3-phospho-(1'-sn-glycerol) + H2O = sn-glycero-3-phospho-(1'-sn-glycerol) + (9Z)-octadecenoate + H(+). It catalyses the reaction 1-(9Z-octadecenoyl)-sn-glycero-3-phospho-(1D-myo-inositol) + H2O = sn-glycero-3-phospho-1D-myo-inositol + (9Z)-octadecenoate + H(+). The catalysed reaction is 1-(9Z-octadecenoyl)-sn-glycero-3-phosphoethanolamine + H2O = sn-glycero-3-phosphoethanolamine + (9Z)-octadecenoate + H(+). The enzyme catalyses 1-(9Z-octadecenoyl)-sn-glycero-3-phosphocholine + H2O = 1-(9Z-octadecenoyl)-sn-glycerol + phosphocholine + H(+). It carries out the reaction 2-(9Z-octadecenoyl)-glycerol + H2O = glycerol + (9Z)-octadecenoate + H(+). It catalyses the reaction 1-hexadecanoyl-sn-glycero-3-phospho-L-serine + H2O = sn-glycero-3-phospho-L-serine + hexadecanoate + H(+). The catalysed reaction is 2-(5Z,8Z,11Z,14Z-eicosatetraenoyl)-glycerol + H2O = glycerol + (5Z,8Z,11Z,14Z)-eicosatetraenoate + H(+). The enzyme catalyses Hydrolyzes glycerol monoesters of long-chain fatty acids.. It carries out the reaction 1-decanoylglycerol + H2O = decanoate + glycerol + H(+). It catalyses the reaction 1-dodecanoylglycerol + H2O = dodecanoate + glycerol + H(+). The catalysed reaction is 1-tetradecanoylglycerol + H2O = tetradecanoate + glycerol + H(+). The enzyme catalyses 2-hexadecanoylglycerol + H2O = glycerol + hexadecanoate + H(+). It carries out the reaction 1-(9Z-octadecenoyl)-glycerol + H2O = glycerol + (9Z)-octadecenoate + H(+). It catalyses the reaction 2-(9Z,12Z-octadecadienoyl)-glycerol + H2O = (9Z,12Z)-octadecadienoate + glycerol + H(+). The catalysed reaction is 1-(5Z,8Z,11Z,14Z-eicosatetraenoyl)-glycerol + H2O = glycerol + (5Z,8Z,11Z,14Z)-eicosatetraenoate + H(+). The enzyme catalyses 1-(9Z,12Z-octadecadienoyl)-glycerol + H2O = (9Z,12Z)-octadecadienoate + glycerol + H(+). It carries out the reaction 1-hexadecanoylglycerol + H2O = glycerol + hexadecanoate + H(+). It catalyses the reaction 1-octadecanoylglycerol + H2O = octadecanoate + glycerol + H(+). The catalysed reaction is 1-octadecanoyl-2-(9,10-epoxyoctadecanoyl)-sn-glycero-3-phospho-L-serine + H2O = 9,10-epoxyoctadecanoate + 1-octadecanoyl-sn-glycero-3-phosphoserine + H(+). The enzyme catalyses 1-octadecanoyl-2-(10-hydroxyoctadecanoyl)-sn-glycero-3-phospho-L-serine + H2O = 1-octadecanoyl-sn-glycero-3-phosphoserine + 10-hydroxyoctadecanoate + H(+). It carries out the reaction 1-hexadecanoyl-2-(10-hydroxyoctadecanoyl)-sn-glycero-3-phospho-L-serine + H2O = 10-hydroxyoctadecanoate + 1-hexadecanoyl-sn-glycero-3-phospho-L-serine + H(+). With respect to regulation, selectively inhibited by DO264 (N-3-pyridyl-N'-(1-[3-chloro-4-{2-chloro-4-(trifluoromethoxy)phenoxy}pyridine-2-yl]piperidin-4-yl)thiourea). Its function is as follows. Lysophosphatidylserine (LPS) lipase that mediates the hydrolysis of lysophosphatidylserine, a class of signaling lipids that regulates immunological and neurological processes. Represents a major lysophosphatidylserine lipase in the brain, thereby playing a key role in the central nervous system. Also able to hydrolyze oxidized phosphatidylserine; oxidized phosphatidylserine is produced in response to severe inflammatory stress and constitutes a proapoptotic 'eat me' signal. Also has monoacylglycerol (MAG) lipase activity: hydrolyzes 2-arachidonoylglycerol (2-AG), thereby acting as a regulator of endocannabinoid signaling pathways. Has a strong preference for very-long-chain lipid substrates; substrate specificity is likely due to improved catalysis and not improved substrate binding. This is Lysophosphatidylserine lipase ABHD12 from Mus musculus (Mouse).